An 815-amino-acid polypeptide reads, in one-letter code: 1,4-alpha-glucan branching enzyme GlgB (815 aa).

Residue Asp-405 is the Nucleophile of the active site. The active-site Proton donor is the Glu-458.

This sequence belongs to the glycosyl hydrolase 13 family. GlgB subfamily. As to quaternary structure, monomer.

The catalysed reaction is Transfers a segment of a (1-&gt;4)-alpha-D-glucan chain to a primary hydroxy group in a similar glucan chain.. Its pathway is glycan biosynthesis; glycogen biosynthesis. Its function is as follows. Catalyzes the formation of the alpha-1,6-glucosidic linkages in glycogen by scission of a 1,4-alpha-linked oligosaccharide from growing alpha-1,4-glucan chains and the subsequent attachment of the oligosaccharide to the alpha-1,6 position. This is 1,4-alpha-glucan branching enzyme GlgB from Histophilus somni (strain 2336) (Haemophilus somnus).